Consider the following 380-residue polypeptide: Cytochrome b (380 aa).

4 helical membrane passes run 34–54 (FGSL…ILAM), 78–100 (WLMR…AHMG), 113–133 (TWNI…MGYV), and 179–199 (FFAF…VHLL). Heme b contacts are provided by His84 and His98. The heme b site is built by His183 and His197. His202 is an a ubiquinone binding site. The next 4 helical transmembrane spans lie at 225-245 (FSWK…TITL), 289-309 (LGGV…MLTH), 324-344 (VIFW…AAPV), and 349-369 (ITLG…APMI).

The protein belongs to the cytochrome b family. As to quaternary structure, the main subunits of complex b-c1 are: cytochrome b, cytochrome c1 and the Rieske protein. Requires heme b as cofactor.

It is found in the mitochondrion inner membrane. In terms of biological role, component of the ubiquinol-cytochrome c reductase complex (complex III or cytochrome b-c1 complex) that is part of the mitochondrial respiratory chain. The b-c1 complex mediates electron transfer from ubiquinol to cytochrome c. Contributes to the generation of a proton gradient across the mitochondrial membrane that is then used for ATP synthesis. This Xenoturbella bocki (Marine worm) protein is Cytochrome b (mt:Cyt-b).